Here is a 245-residue protein sequence, read N- to C-terminus: UPF0246 protein LBUL_1917 (245 aa).

The protein belongs to the UPF0246 family.

The sequence is that of UPF0246 protein LBUL_1917 from Lactobacillus delbrueckii subsp. bulgaricus (strain ATCC BAA-365 / Lb-18).